The sequence spans 82 residues: Small ribosomal subunit protein bS20 (82 aa).

This sequence belongs to the bacterial ribosomal protein bS20 family.

Its function is as follows. Binds directly to 16S ribosomal RNA. This Streptococcus pyogenes serotype M12 (strain MGAS2096) protein is Small ribosomal subunit protein bS20.